A 137-amino-acid polypeptide reads, in one-letter code: Cucumber peeling cupredoxin (137 aa).

Residue Gln1 is modified to Pyrrolidone carboxylic acid. Positions 3–107 (TVHIVGDNTG…GQKLSINVVA (105 aa)) constitute a Phytocyanin domain. The Cu cation site is built by His46, Cys89, His94, and Gln99. Residues Cys60 and Cys95 are joined by a disulfide bond. A glycan (N-linked (GlcNAc...) asparagine) is linked at Asn109. The tract at residues 112–137 (VSMPPPSSSPPSSVMPPPVMPPPSPS) is disordered. Pro residues predominate over residues 114 to 137 (MPPPSSSPPSSVMPPPVMPPPSPS). Pro115 carries the 4-hydroxyproline; partial modification. 4-hydroxyproline occurs at positions 116, 117, 121, and 122. 4-hydroxyproline; partial is present on Pro127. Residues Pro128, Pro129, Pro133, Pro134, and Pro136 each carry the 4-hydroxyproline modification.

The protein is Cucumber peeling cupredoxin of Cucumis sativus (Cucumber).